Here is a 336-residue protein sequence, read N- to C-terminus: tRNA (guanine(37)-N(1))-methyltransferase Trm5b (336 aa).

S-adenosyl-L-methionine is bound by residues Arg186, 223-224 (DI), 251-252 (DV), and Asn265.

It belongs to the class I-like SAM-binding methyltransferase superfamily. TRM5/TYW2 family. In terms of assembly, monomer.

It localises to the cytoplasm. The catalysed reaction is guanosine(37) in tRNA + S-adenosyl-L-methionine = N(1)-methylguanosine(37) in tRNA + S-adenosyl-L-homocysteine + H(+). Functionally, specifically methylates the N1 position of guanosine-37 in various tRNAs. The sequence is that of tRNA (guanine(37)-N(1))-methyltransferase Trm5b (trm5b) from Methanocaldococcus jannaschii (strain ATCC 43067 / DSM 2661 / JAL-1 / JCM 10045 / NBRC 100440) (Methanococcus jannaschii).